Consider the following 200-residue polypeptide: Holliday junction resolvase RecU (200 aa).

The segment at 1-27 is disordered; it reads MALKYPSGKEYRGNKPNAARRPAADYA. The Mg(2+) site is built by T84, D86, E99, and Q118.

Belongs to the RecU family. Homodimer. Requires Mg(2+) as cofactor.

Its subcellular location is the cytoplasm. The catalysed reaction is Endonucleolytic cleavage at a junction such as a reciprocal single-stranded crossover between two homologous DNA duplexes (Holliday junction).. Functionally, endonuclease that resolves Holliday junction intermediates in genetic recombination. Cleaves mobile four-strand junctions by introducing symmetrical nicks in paired strands. Promotes annealing of linear ssDNA with homologous dsDNA. Required for DNA repair, homologous recombination and chromosome segregation. The protein is Holliday junction resolvase RecU of Geobacillus kaustophilus (strain HTA426).